Consider the following 130-residue polypeptide: Small ribosomal subunit protein uS11 (130 aa).

Belongs to the universal ribosomal protein uS11 family. As to quaternary structure, part of the 30S ribosomal subunit. Interacts with proteins S7 and S18. Binds to IF-3.

Located on the platform of the 30S subunit, it bridges several disparate RNA helices of the 16S rRNA. Forms part of the Shine-Dalgarno cleft in the 70S ribosome. The sequence is that of Small ribosomal subunit protein uS11 from Pseudoalteromonas atlantica (strain T6c / ATCC BAA-1087).